Here is a 689-residue protein sequence, read N- to C-terminus: Glycine--tRNA ligase beta subunit (689 aa).

The protein belongs to the class-II aminoacyl-tRNA synthetase family. As to quaternary structure, tetramer of two alpha and two beta subunits.

The protein resides in the cytoplasm. It carries out the reaction tRNA(Gly) + glycine + ATP = glycyl-tRNA(Gly) + AMP + diphosphate. This Salmonella agona (strain SL483) protein is Glycine--tRNA ligase beta subunit.